The chain runs to 98 residues: Citrate lyase acyl carrier protein (98 aa).

An O-(phosphoribosyl dephospho-coenzyme A)serine modification is found at Ser-14.

It belongs to the CitD family. As to quaternary structure, oligomer with a subunit composition of (alpha,beta,gamma)6.

Its subcellular location is the cytoplasm. Its function is as follows. Covalent carrier of the coenzyme of citrate lyase. This is Citrate lyase acyl carrier protein from Salmonella arizonae (strain ATCC BAA-731 / CDC346-86 / RSK2980).